A 376-amino-acid chain; its full sequence is Integrator complex assembly factor WDR73 (376 aa).

3 WD repeats span residues 84 to 123 (FSEE…SDVI), 276 to 316 (ASKN…TESS), and 337 to 376 (TSPA…ITDR). The tract at residues 316–336 (SSPQPIFSHRGHEMSQEAKSS) is disordered.

Belongs to the WD repeat WDR73 family.

It is found in the cytoplasm. It localises to the cytoskeleton. Its subcellular location is the spindle. The protein resides in the spindle pole. The protein localises to the cleavage furrow. Functionally, component of a multiprotein complex required for the assembly of the RNA endonuclease module of the integrator complex. Associates with ints9 and ints11 in the cytoplasm, stabilizing the ints9-ints11 heterodimer and blocking the active site of ints11. Brat1 then joins the complex and plugs the active site of ints11, leading to wdr73 release and nuclear import of ints9 and ints11. The protein is Integrator complex assembly factor WDR73 (wdr73) of Danio rerio (Zebrafish).